We begin with the raw amino-acid sequence, 318 residues long: uncharacterized protein (318 aa).

This is an uncharacterized protein from Escherichia coli (strain K12).